The primary structure comprises 329 residues: MSSNAGEWCLMESDPGVFTELIKGFGCRGAQVEEIWSLEPESFEKLKPVHGLIFLFKWQPGEEPAGSVVQDSRLETIFFAKQVINNACATQAIVSVLLNCTHQDVHLGETLSEFKEFSQSFDAAMKGLALSNSDVIRQVHNSFARQQMFEFDTKTPAKEEDAFHFVSYVPVNGRLYELDGLREGPIDLGACNQDDWITAVRPVIEKRIQKYSEGEIRFNLMAIVSDRKMIYEQKIAELQRQLAEEEPMDTDQGSTVLSAIQSEVARNQMLIEEEVQKLKRYKIENIRRKHNYLPFIMELLKTLAEHQQLIPLVEKAKEKQNAKKAQETK.

A UCH catalytic domain is found at 7–225 (EWCLMESDPG…IRFNLMAIVS (219 aa)). Lysine 47 carries the N6-succinyllysine modification. The active-site Nucleophile is cysteine 88. Lysine 158 is modified (N6-acetyllysine). Histidine 164 (proton donor) is an active-site residue. Lysine 289 bears the N6-succinyllysine mark. In terms of domain architecture, ULD spans 291-319 (NYLPFIMELLKTLAEHQQLIPLVEKAKEK). Residues 313–329 (VEKAKEKQNAKKAQETK) form an interaction with ADRM1 region.

It belongs to the peptidase C12 family. In terms of assembly, component of the 19S (PA700) regulatory complex of the 26S proteasome. Interacts with ADRM1 and NFRKB. Component of the INO80 complex; specifically part of a complex module associated with N-terminus of INO80.

It is found in the cytoplasm. Its subcellular location is the nucleus. The catalysed reaction is Thiol-dependent hydrolysis of ester, thioester, amide, peptide and isopeptide bonds formed by the C-terminal Gly of ubiquitin (a 76-residue protein attached to proteins as an intracellular targeting signal).. With respect to regulation, activated by ADRM1. Inhibited by interaction with NFRKB. In terms of biological role, protease that specifically cleaves 'Lys-48'-linked polyubiquitin chains. Deubiquitinating enzyme associated with the 19S regulatory subunit of the 26S proteasome. Putative regulatory component of the INO80 complex; however is inactive in the INO80 complex and is activated by a transient interaction of the INO80 complex with the proteasome via ADRM1. The chain is Ubiquitin carboxyl-terminal hydrolase isozyme L5 (Uchl5) from Mus musculus (Mouse).